A 305-amino-acid polypeptide reads, in one-letter code: Dermonecrotic toxin LiSicTox-betaID1 (305 aa).

Positions Met1–Gly18 are cleaved as a signal peptide. The propeptide occupies Thr19–Arg26. His38 is an active-site residue. 2 residues coordinate Mg(2+): Glu58 and Asp60. The Nucleophile role is filled by His74. Cystine bridges form between Cys78/Cys84 and Cys80/Cys223. Asp118 lines the Mg(2+) pocket.

The protein belongs to the arthropod phospholipase D family. Class II subfamily. Class IIb sub-subfamily. Mg(2+) serves as cofactor. Expressed by the venom gland.

The protein localises to the secreted. The catalysed reaction is an N-(acyl)-sphingosylphosphocholine = an N-(acyl)-sphingosyl-1,3-cyclic phosphate + choline. The enzyme catalyses an N-(acyl)-sphingosylphosphoethanolamine = an N-(acyl)-sphingosyl-1,3-cyclic phosphate + ethanolamine. It catalyses the reaction a 1-acyl-sn-glycero-3-phosphocholine = a 1-acyl-sn-glycero-2,3-cyclic phosphate + choline. It carries out the reaction a 1-acyl-sn-glycero-3-phosphoethanolamine = a 1-acyl-sn-glycero-2,3-cyclic phosphate + ethanolamine. Functionally, dermonecrotic toxins cleave the phosphodiester linkage between the phosphate and headgroup of certain phospholipids (sphingolipid and lysolipid substrates), forming an alcohol (often choline) and a cyclic phosphate. This toxin acts on sphingomyelin (SM) with low activity. It may also act on ceramide phosphoethanolamine (CPE), lysophosphatidylcholine (LPC) and lysophosphatidylethanolamine (LPE), but not on lysophosphatidylserine (LPS), and lysophosphatidylglycerol (LPG). It acts by transphosphatidylation, releasing exclusively cyclic phosphate products as second products. Has no or weak activities in inducing dermonecrosis, hemolysis, inflammatory response, platelet aggregation and increase in vessel permeability. In vivo, shows no lethality when injected at higher dose into mice. The protein is Dermonecrotic toxin LiSicTox-betaID1 of Loxosceles intermedia (Brown spider).